Here is a 2266-residue protein sequence, read N- to C-terminus: Little elongation complex subunit 1 (2266 aa).

Residues 23-186 (CASLQQNLNE…KQKNEKELRH (164 aa)) adopt a coiled-coil conformation. Disordered stretches follow at residues 223–259 (GEGSRCVPEKPAKAITSSRVPGEDGTLPPTQGSPLRT) and 517–540 (PAQEKEAAPGKSELCSSPLGKRPL). A compositionally biased stretch (polar residues) spans 250–259 (PPTQGSPLRT). 4 positions are modified to phosphoserine: serine 255, serine 533, serine 558, and serine 589. Residues 591-623 (ELEKEKEDTQGFTLGESPESEDDDSGDGMDVAG) are disordered. Acidic residues predominate over residues 608-617 (PESEDDDSGD). A Phosphoserine modification is found at serine 707. Phosphothreonine is present on threonine 832. Serine 925 bears the Phosphoserine mark. Residues 925–955 (SPEVSASRRKLDFNSPGGSSPVENSDCSTNS) are disordered. A compositionally biased stretch (polar residues) spans 940–955 (PGGSSPVENSDCSTNS). Serine 958 is modified (phosphoserine). 2 disordered regions span residues 977–1001 (VQGDGQKQRQPQATDLDSSGTHGSE) and 1107–1133 (TEVESEAFSCSEGSEQQDAPDDSQKNL). Residues 984 to 998 (QRQPQATDLDSSGTH) show a composition bias toward polar residues. Lysine 1218 is subject to N6-acetyllysine. Disordered regions lie at residues 1295-1372 (TTEN…PSAL), 1467-1510 (AEKS…KSRL), and 1543-1707 (NSKL…SASE). Polar residues-rich tracts occupy residues 1306–1319 (RETTGSSSHASEPT), 1328–1344 (EGSSPISGMPQNENPQS), 1487–1505 (NNLSCPQEDVSSSGQSTNF), 1565–1588 (NKPVKTSASSRVETHQSEVAQSFS), and 1594–1605 (TKTQRSQTQTIL). Phosphoserine is present on serine 1588. 2 stretches are compositionally biased toward low complexity: residues 1609–1620 (DTSTPTDCSPDT) and 1637–1671 (APLIATPPRTSQPLSPLISSSSPSSPASPVGQVSP). Phosphoserine is present on serine 1617. Position 1642 is a phosphothreonine (threonine 1642). Phosphoserine occurs at positions 1692, 1697, 1699, 1701, 1712, 1838, and 1854. Positions 1809-1902 (TGSSSGGDCN…AVSAVSQLPL (94 aa)) are disordered. Residues 1825-1843 (LGTQQDSSGKRTLSTSTLR) show a composition bias toward polar residues. The span at 1889–1901 (CSSPAVSAVSQLP) shows a compositional bias: polar residues. Serine 1903 is modified (phosphoserine).

This sequence belongs to the ICE1 family. Component of the little elongation complex (LEC), at least composed of ELL (ELL, ELL2 or ELL3), ZC3H8, ICE1 and ICE2. Interacts (via N-terminus domain) with ELL. Interacts (via C-terminus domain) with ICE2 and ZC3H8.

It is found in the nucleus. It localises to the cajal body. Component of the little elongation complex (LEC), a complex required to regulate small nuclear RNA (snRNA) gene transcription by RNA polymerase II and III. Specifically acts as a scaffold protein that promotes the LEC complex formation and recruitment and RNA polymerase II occupancy at snRNA genes in subnuclear bodies. This Homo sapiens (Human) protein is Little elongation complex subunit 1 (ICE1).